Reading from the N-terminus, the 880-residue chain is Alanine--tRNA ligase (880 aa).

Residues His567, His571, Cys669, and His673 each contribute to the Zn(2+) site.

Belongs to the class-II aminoacyl-tRNA synthetase family. Zn(2+) serves as cofactor.

The protein localises to the cytoplasm. The catalysed reaction is tRNA(Ala) + L-alanine + ATP = L-alanyl-tRNA(Ala) + AMP + diphosphate. Its function is as follows. Catalyzes the attachment of alanine to tRNA(Ala) in a two-step reaction: alanine is first activated by ATP to form Ala-AMP and then transferred to the acceptor end of tRNA(Ala). Also edits incorrectly charged Ser-tRNA(Ala) and Gly-tRNA(Ala) via its editing domain. The sequence is that of Alanine--tRNA ligase from Bacillus cereus (strain ZK / E33L).